Reading from the N-terminus, the 642-residue chain is Poly(A) polymerase beta (642 aa).

ATP contacts are provided by residues 101 to 103, Thr-110, 114 to 116, Asp-168, Lys-229, Tyr-238, and 247 to 248; these read FGS, DID, and GV. Residues Asp-114, Asp-116, and Asp-168 each contribute to the Mg(2+) site. 2 disordered regions span residues 530 to 553 and 620 to 642; these read SENSMTAPSPTGTMKTGPLTGNPQ and LVNHPSRPSGNTATNIPNPILGV. Residues 620–636 show a composition bias toward polar residues; that stretch reads LVNHPSRPSGNTATNIP.

The protein belongs to the poly(A) polymerase family. As to quaternary structure, interacts with GSG1. Requires Mg(2+) as cofactor. The cofactor is Mn(2+). Testis specific.

It localises to the cytoplasm. Its subcellular location is the nucleus. The catalysed reaction is RNA(n) + ATP = RNA(n)-3'-adenine ribonucleotide + diphosphate. This chain is Poly(A) polymerase beta, found in Mus musculus (Mouse).